Consider the following 270-residue polypeptide: MEPSLLMWGFFTFTMIPGCMAGACVQQPPSLRNATFKILGYKVGTTLNCDCQRGFRRDPSSGPYMICRGNSSHSFWENKCQCMPTSSPRIPVKQVTPRPEEQKERKTTETQGQMQPPNQANLPGHCKEPPPWEHESLKRVYHFMEGQTVRYQCLPGFRDGSAQNNSAQSVCKKQEDQEVMRWTQPKLKCKSEKENGSFPEPQMSTAAPPTTKTSLPTRTKGTTDSQNLTEVPATMQPIIFTTQYQLAVAGCVLLLLSILLLSGLTWQRRR.

A signal peptide spans 1-21; that stretch reads MEPSLLMWGFFTFTMIPGCMA. Positions 22–84 constitute a Sushi 1 domain; that stretch reads GACVQQPPSL…FWENKCQCMP (63 aa). At 22–245 the chain is on the extracellular side; it reads GACVQQPPSL…QPIIFTTQYQ (224 aa). Cystine bridges form between Cys24-Cys67, Cys49-Cys80, and Cys51-Cys82. Residues Asn33 and Asn70 are each glycosylated (N-linked (GlcNAc...) asparagine). The interval 87–124 is disordered; the sequence is SPRIPVKQVTPRPEEQKERKTTETQGQMQPPNQANLPG. Residues 98 to 108 are compositionally biased toward basic and acidic residues; sequence RPEEQKERKTT. Polar residues predominate over residues 112-121; it reads GQMQPPNQAN. The 68-residue stretch at 124–191 folds into the Sushi 2 domain; it reads GHCKEPPPWE…WTQPKLKCKS (68 aa). 2 disulfides stabilise this stretch: Cys126-Cys171 and Cys153-Cys189. N-linked (GlcNAc...) asparagine glycosylation is found at Asn164 and Asn195. The tract at residues 190 to 225 is disordered; that stretch reads KSEKENGSFPEPQMSTAAPPTTKTSLPTRTKGTTDS. Residues 202-225 show a composition bias toward polar residues; it reads QMSTAAPPTTKTSLPTRTKGTTDS. N-linked (GlcNAc...) asparagine glycosylation is present at Asn227. A helical transmembrane segment spans residues 246–264; sequence LAVAGCVLLLLSILLLSGL. Residues 265–270 are Cytoplasmic-facing; sequence TWQRRR.

In terms of assembly, non-covalent dimer of an alpha and a beta subunit. IL2R exists in 3 different forms: a high affinity dimer, an intermediate affinity monomer (beta subunit), and a low affinity monomer (alpha subunit). The high and intermediate affinity forms also associate with a gamma subunit.

Its subcellular location is the membrane. Functionally, receptor for interleukin-2. The receptor is involved in the regulation of immune tolerance by controlling regulatory T cells (TREGs) activity. TREGs suppress the activation and expansion of autoreactive T-cells. The chain is Interleukin-2 receptor subunit alpha (IL2RA) from Sus scrofa (Pig).